A 324-amino-acid polypeptide reads, in one-letter code: Glyoxylate/hydroxypyruvate reductase B (324 aa).

Catalysis depends on residues Arg237 and Glu266. His285 acts as the Proton donor in catalysis.

Belongs to the D-isomer specific 2-hydroxyacid dehydrogenase family. GhrB subfamily. Homodimer.

It is found in the cytoplasm. The enzyme catalyses glycolate + NADP(+) = glyoxylate + NADPH + H(+). It catalyses the reaction (R)-glycerate + NAD(+) = 3-hydroxypyruvate + NADH + H(+). The catalysed reaction is (R)-glycerate + NADP(+) = 3-hydroxypyruvate + NADPH + H(+). Its function is as follows. Catalyzes the NADPH-dependent reduction of glyoxylate and hydroxypyruvate into glycolate and glycerate, respectively. The polypeptide is Glyoxylate/hydroxypyruvate reductase B (Escherichia coli (strain ATCC 8739 / DSM 1576 / NBRC 3972 / NCIMB 8545 / WDCM 00012 / Crooks)).